A 598-amino-acid polypeptide reads, in one-letter code: Autophagy-related protein 22-1 (598 aa).

Residues 1–20 form a disordered region; it reads MEDGGAGLRAPRYPAEDTSP. A helical membrane pass occupies residues 28–48; it reads GFFCYGLAAEVFAVCAVGSFL. 2 N-linked (GlcNAc...) asparagine glycosylation sites follow: Asn74 and Asn80. Transmembrane regions (helical) follow at residues 111 to 131, 159 to 179, and 182 to 202; these read SFAMYTFSASVFMQALALVSV, FLLVVPQIFVVGSFLTVICVV, and GCSFVILNSYLPLLVLNHPVV. A disordered region spans residues 207–238; the sequence is DHPTASSSIPLQPISPQRSSRKSEESLHQVNR. Over residues 212–224 the composition is skewed to low complexity; that stretch reads SSSIPLQPISPQR. Residues 227–238 are compositionally biased toward basic and acidic residues; sequence RKSEESLHQVNR. Residues 263–283 traverse the membrane as a helical segment; that stretch reads VGIGYMAAVSVQVICILILYI. Residue Asn285 is glycosylated (N-linked (GlcNAc...) asparagine). A run of 7 helical transmembrane segments spans residues 297 to 317, 363 to 383, 400 to 420, 431 to 451, 465 to 485, 489 to 509, and 534 to 554; these read TVLFFVGSWWLTFTIPSVMWL, VLLFLIAWFLLSDAVATISAT, ALLSIIATSSGIIGATVWPII, IIVCCLLLLELVPLYGLLGFL, WYEIYPLGIIHGMVMGGLSSY, FYGLLIPPGSEAAFYALFAIT, and AFGFLAVLIALPIPLIWMVDV. The disordered stretch occupies residues 575–598; it reads HEDFESFEGSSDGHEAEGLMRDHD. The span at 585 to 598 shows a compositional bias: basic and acidic residues; that stretch reads SDGHEAEGLMRDHD.

It belongs to the ATG22 family.

The protein resides in the vacuole membrane. Vacuolar effluxer which mediate the efflux of amino acids resulting from autophagic degradation. The release of autophagic amino acids allows the maintenance of protein synthesis and viability during nitrogen starvation. The polypeptide is Autophagy-related protein 22-1 (atg22-1) (Sclerotinia sclerotiorum (strain ATCC 18683 / 1980 / Ss-1) (White mold)).